Consider the following 469-residue polypeptide: Serine carboxypeptidase-like 41 (469 aa).

Positions 1-20 (MAIVSLRDVAMVMVTVQVFA) are cleaved as a signal peptide. Intrachain disulfides connect Cys83-Cys342, Cys243-Cys260, and Cys285-Cys310. An N-linked (GlcNAc...) asparagine glycan is attached at Asn134. Ser175 is an active-site residue. Asn255 is a glycosylation site (N-linked (GlcNAc...) asparagine). 2 N-linked (GlcNAc...) asparagine glycosylation sites follow: Asn331 and Asn347. Active-site residues include Asp379 and His436. Asn461 is a glycosylation site (N-linked (GlcNAc...) asparagine).

It belongs to the peptidase S10 family. In terms of tissue distribution, expressed in flowers.

Its subcellular location is the secreted. Probable carboxypeptidase. The sequence is that of Serine carboxypeptidase-like 41 (SCPL41) from Arabidopsis thaliana (Mouse-ear cress).